The primary structure comprises 260 residues: PsbP domain-containing protein 4, chloroplastic (260 aa).

Belongs to the PsbP family.

The protein resides in the plastid. Its subcellular location is the chloroplast thylakoid lumen. The chain is PsbP domain-containing protein 4, chloroplastic (PPD4) from Arabidopsis thaliana (Mouse-ear cress).